A 508-amino-acid polypeptide reads, in one-letter code: UTP--glucose-1-phosphate uridylyltransferase (508 aa).

Ser13 carries the phosphoserine modification. Residues 113–116 (LNGG), Lys127, Gln190, and Gly222 contribute to the UTP site. Residue 115–116 (GG) coordinates substrate. Lys127 contacts Mg(2+). Substrate is bound by residues His223 and 251 to 253 (NID). Positions 253 and 396 each coordinate UTP. Asp253 is a Mg(2+) binding site. Residue Lys396 is part of the active site. Thr426 is modified (phosphothreonine). Ser434 carries the post-translational modification Phosphoserine. Residue Lys438 is modified to N6-acetyllysine. Residues Ser448 and Ser461 each carry the phosphoserine modification. Residues 457 to 508 (HLTVSGDVTFGKNVSLKGTVIIIXNHGDRIDIPPGAVLENKIVSGNLRILDH) are oligomerization. The tract at residues 502–503 (NL) is critical for end-to-end subunit interaction.

Belongs to the UDPGP type 1 family. In terms of assembly, homooctamer.

It is found in the cytoplasm. The catalysed reaction is alpha-D-glucose 1-phosphate + UTP + H(+) = UDP-alpha-D-glucose + diphosphate. It functions in the pathway glycan biosynthesis; glycogen biosynthesis. Its function is as follows. UTP--glucose-1-phosphate uridylyltransferase catalyzing the conversion of glucose-1-phosphate into UDP-glucose, a crucial precursor for the production of glycogen. This is UTP--glucose-1-phosphate uridylyltransferase (UGP2) from Sus scrofa (Pig).